A 242-amino-acid chain; its full sequence is Adenosylcobinamide-GDP ribazoletransferase (242 aa).

Transmembrane regions (helical) follow at residues 31 to 51 (LLFYPVVGVLFGVLLWALSTA), 52 to 72 (LMGAPLLLHAALLLTAWVLLS), 109 to 129 (IAVVTLGLVLLLKFTALVALI), 134 to 154 (GAALILAPLIGRASMLALFLT), and 188 to 208 (ILIGGFSGGVAVLLAAICFIG).

Belongs to the CobS family. It depends on Mg(2+) as a cofactor.

It localises to the cell inner membrane. It carries out the reaction alpha-ribazole + adenosylcob(III)inamide-GDP = adenosylcob(III)alamin + GMP + H(+). The catalysed reaction is alpha-ribazole 5'-phosphate + adenosylcob(III)inamide-GDP = adenosylcob(III)alamin 5'-phosphate + GMP + H(+). It participates in cofactor biosynthesis; adenosylcobalamin biosynthesis; adenosylcobalamin from cob(II)yrinate a,c-diamide: step 7/7. Its function is as follows. Joins adenosylcobinamide-GDP and alpha-ribazole to generate adenosylcobalamin (Ado-cobalamin). Also synthesizes adenosylcobalamin 5'-phosphate from adenosylcobinamide-GDP and alpha-ribazole 5'-phosphate. The protein is Adenosylcobinamide-GDP ribazoletransferase of Pseudomonas fluorescens (strain SBW25).